A 438-amino-acid polypeptide reads, in one-letter code: MGLGFSSKKQLPAYCGPLPVGSLVLELSVPEEFRCEYKTIEHKLRTVKVRIFYPLDPTKDVEPRTDELWLPFHEGIPEVAKGFRWWLLRAFASGLTNLALPVYKGELFHPPNNGKLPVFIFSHGLVGSRNVYSSLCGTIASYGIVVLAMEHRDNSAIISTVRDPLHPEEPPYVVQYREISDFYADATVVLQNERLLFRQQEIQIALQMIRNINDLGTPDENLPFLCSVDSSFYNSVFQSMKGNLNTAQGELIVAGHSFGAATCAFISGSSTKSLYNDYMFHTEFKCSILYDIWMLPVRQLHLSTMRYPTLMIISYEFRRFVDNFQALESWLVNKDSENQNAGESADEKMSVVPLKKYSHVFVYDGTVHANQSDLPILLPRMVLRVLKGKFEADPYEALRINTRSSVQFLRENHVENVQGDNDPSSLQTNIIPGWERIM.

The active-site Nucleophile is Ser-257. Active-site charge relay system residues include Asp-291 and His-368.

It belongs to the serine esterase family.

It is found in the cytoplasm. It localises to the nucleus. It catalyses the reaction a 1-O-alkyl-2-acetyl-sn-glycero-3-phosphocholine + H2O = a 1-O-alkyl-sn-glycero-3-phosphocholine + acetate + H(+). The polypeptide is Putative phospholipase A2 (Schizosaccharomyces pombe (strain 972 / ATCC 24843) (Fission yeast)).